The chain runs to 572 residues: Proline--tRNA ligase (572 aa).

It belongs to the class-II aminoacyl-tRNA synthetase family. ProS type 1 subfamily. In terms of assembly, homodimer.

The protein localises to the cytoplasm. The enzyme catalyses tRNA(Pro) + L-proline + ATP = L-prolyl-tRNA(Pro) + AMP + diphosphate. Functionally, catalyzes the attachment of proline to tRNA(Pro) in a two-step reaction: proline is first activated by ATP to form Pro-AMP and then transferred to the acceptor end of tRNA(Pro). As ProRS can inadvertently accommodate and process non-cognate amino acids such as alanine and cysteine, to avoid such errors it has two additional distinct editing activities against alanine. One activity is designated as 'pretransfer' editing and involves the tRNA(Pro)-independent hydrolysis of activated Ala-AMP. The other activity is designated 'posttransfer' editing and involves deacylation of mischarged Ala-tRNA(Pro). The misacylated Cys-tRNA(Pro) is not edited by ProRS. The polypeptide is Proline--tRNA ligase (Yersinia pseudotuberculosis serotype O:1b (strain IP 31758)).